The chain runs to 828 residues: Periplasmic nitrate reductase (828 aa).

The segment at residues 1–31 (MKLSRRGFMKANAVAAAAAAAGLSVPGVARA) is a signal peptide (tat-type signal). One can recognise a 4Fe-4S Mo/W bis-MGD-type domain in the interval 39–95 (IKWDKAPCRFCGTGCGVLVGTQQGRVVACQGDPDAPVNRGLNCIKGYFLPKIMYGED). [4Fe-4S] cluster is bound by residues cysteine 46, cysteine 49, cysteine 53, and cysteine 81. Residues lysine 83, glutamine 150, asparagine 175, cysteine 179, 212-219 (WGANMAEM), 243-247 (STYQH), 262-264 (QSD), methionine 372, glutamine 376, asparagine 482, 508-509 (SD), lysine 531, aspartate 558, and 718-727 (TGRVLEHWHT) contribute to the Mo-bis(molybdopterin guanine dinucleotide) site. Phenylalanine 794 lines the substrate pocket. Residues asparagine 802 and lysine 819 each coordinate Mo-bis(molybdopterin guanine dinucleotide).

Belongs to the prokaryotic molybdopterin-containing oxidoreductase family. NasA/NapA/NarB subfamily. As to quaternary structure, component of the periplasmic nitrate reductase NapAB complex composed of NapA and NapB. Requires [4Fe-4S] cluster as cofactor. Mo-bis(molybdopterin guanine dinucleotide) is required as a cofactor. Predicted to be exported by the Tat system. The position of the signal peptide cleavage has not been experimentally proven.

The protein resides in the periplasm. It catalyses the reaction 2 Fe(II)-[cytochrome] + nitrate + 2 H(+) = 2 Fe(III)-[cytochrome] + nitrite + H2O. In terms of biological role, catalytic subunit of the periplasmic nitrate reductase complex NapAB. Receives electrons from NapB and catalyzes the reduction of nitrate to nitrite. The polypeptide is Periplasmic nitrate reductase (Shigella dysenteriae serotype 1 (strain Sd197)).